A 365-amino-acid chain; its full sequence is Alanine racemase (365 aa).

The active-site Proton acceptor; specific for D-alanine is the K32. K32 is subject to N6-(pyridoxal phosphate)lysine. R128 is a substrate binding site. Catalysis depends on Y257, which acts as the Proton acceptor; specific for L-alanine. M305 is a binding site for substrate.

The protein belongs to the alanine racemase family. Pyridoxal 5'-phosphate serves as cofactor.

The catalysed reaction is L-alanine = D-alanine. Its pathway is amino-acid biosynthesis; D-alanine biosynthesis; D-alanine from L-alanine: step 1/1. Its function is as follows. Catalyzes the interconversion of L-alanine and D-alanine. May also act on other amino acids. The polypeptide is Alanine racemase (alr) (Francisella tularensis subsp. mediasiatica (strain FSC147)).